The primary structure comprises 196 residues: Ribonuclease HII (196 aa).

An RNase H type-2 domain is found at 9 to 196 (GLVCGIDEAG…GPVARQLSLL (188 aa)). Positions 15, 16, and 107 each coordinate a divalent metal cation.

The protein belongs to the RNase HII family. Mn(2+) is required as a cofactor. It depends on Mg(2+) as a cofactor.

It is found in the cytoplasm. The enzyme catalyses Endonucleolytic cleavage to 5'-phosphomonoester.. In terms of biological role, endonuclease that specifically degrades the RNA of RNA-DNA hybrids. The sequence is that of Ribonuclease HII from Dechloromonas aromatica (strain RCB).